The chain runs to 410 residues: L-sorbose 1-phosphate reductase (410 aa).

Zn(2+)-binding residues include cysteine 40, histidine 69, and glutamate 70. Residues arginine 221 and 309 to 310 contribute to the NAD(+) site; that span reads GT.

The protein belongs to the zinc-containing alcohol dehydrogenase family. Requires Zn(2+) as cofactor.

Its function is as follows. Reduces L-sorbose 1-phosphate to D-glucitol 6-phosphate. The polypeptide is L-sorbose 1-phosphate reductase (sorE) (Klebsiella pneumoniae).